A 360-amino-acid polypeptide reads, in one-letter code: GDP-mannose transporter (360 aa).

Over 1 to 49 the chain is Cytoplasmic; it reads MSSSETKGRNEEDVAEIKKAIATGAVKDPSNLSAIPPIFVVSGANFSMN. The helical transmembrane segment at 50 to 67 threads the bilayer; it reads FLLLCIQSSVCCACVFAV. The Lumenal portion of the chain corresponds to 68–84; sequence KKLGIISFRDFDMKDAK. The chain crosses the membrane as a helical span at residues 85–105; that stretch reads MWFPISFLLVSVIYTGSKSLQ. Residues 106-110 are Cytoplasmic-facing; sequence YLSIP. A helical membrane pass occupies residues 111-131; sequence VYTIFKNLTIILIAYGEVLWF. Over 132-134 the chain is Lumenal; sequence GGR. Residues 135 to 155 traverse the membrane as a helical segment; sequence VTALTFVSFIFMVISSIIAAW. Residues 156–164 lie on the Cytoplasmic side of the membrane; that stretch reads SDVQSALAS. The helical transmembrane segment at 165–185 threads the bilayer; the sequence is SIPGASSGVSVGAMQSLFGAL. A topological domain (lumenal) is located at residue R186. Residues 187 to 207 traverse the membrane as a helical segment; sequence GLNVGYFWMLVNCLTSAAYVL. At 208-220 the chain is on the cytoplasmic side; the sequence is SMRKRIKSTGFSD. Residues 221–241 traverse the membrane as a helical segment; the sequence is WDTMFYNNLLSIPVLAVFSLI. The Lumenal portion of the chain corresponds to 242–260; it reads AEDWGRENLNRNFPAETRN. The chain crosses the membrane as a helical span at residues 261 to 281; sequence FLLFAIAFSGAAAVGISYTTA. Over 282–291 the chain is Cytoplasmic; that stretch reads WCVRVTSSTT. The helical transmembrane segment at 292-312 threads the bilayer; the sequence is YSMVGALNKLPVAASGMLFFG. The Lumenal segment spans residues 313–314; that stretch reads DP. A helical transmembrane segment spans residues 315–335; that stretch reads VTVGSVSAVGVGFFAGIVYAV. Residues 336–360 are Cytoplasmic-facing; the sequence is AKNNQKKNERRQAADAIIPMASRKP.

Belongs to the TPT transporter family. SLC35D subfamily. Homooligomer.

The protein localises to the golgi apparatus membrane. Its subcellular location is the cytoplasmic vesicle membrane. It localises to the endoplasmic reticulum membrane. Involved in the import of GDP-mannose from the cytoplasm into the Golgi lumen. The protein is GDP-mannose transporter (VRG4) of Coprinopsis cinerea (strain Okayama-7 / 130 / ATCC MYA-4618 / FGSC 9003) (Inky cap fungus).